The following is a 106-amino-acid chain: UPF0060 membrane protein Csal_2746 (106 aa).

Transmembrane regions (helical) follow at residues 6–26 (LLFI…WLWL), 31–51 (SPWL…LLSL), 59–79 (VYAA…WGVD), and 85–105 (PTDW…ASGW).

The protein belongs to the UPF0060 family.

It is found in the cell inner membrane. The protein is UPF0060 membrane protein Csal_2746 of Chromohalobacter salexigens (strain ATCC BAA-138 / DSM 3043 / CIP 106854 / NCIMB 13768 / 1H11).